The primary structure comprises 183 residues: Shikimate kinase (183 aa).

Position 15-20 (15-20) interacts with ATP; the sequence is GSGKST. Position 19 (S19) interacts with Mg(2+). Residues D37, R61, and G85 each contribute to the substrate site. R123 provides a ligand contact to ATP. A substrate-binding site is contributed by R142.

This sequence belongs to the shikimate kinase family. As to quaternary structure, monomer. Mg(2+) serves as cofactor.

The protein localises to the cytoplasm. The enzyme catalyses shikimate + ATP = 3-phosphoshikimate + ADP + H(+). Its pathway is metabolic intermediate biosynthesis; chorismate biosynthesis; chorismate from D-erythrose 4-phosphate and phosphoenolpyruvate: step 5/7. Its function is as follows. Catalyzes the specific phosphorylation of the 3-hydroxyl group of shikimic acid using ATP as a cosubstrate. This chain is Shikimate kinase, found in Paracidovorax citrulli (strain AAC00-1) (Acidovorax citrulli).